Here is a 274-residue protein sequence, read N- to C-terminus: MGMKFFNPVTPSSRGTVLVSKVGLSKDEPEKSLTSGKKSSGGRNNHGRITTRHRGGGHKKKYRVIDFKRNRSGQGIVEKIEYDPNRSGFLALISYKEDDIKSYILAPQGMKPGDVVTAGNDADILPGNCLLLKHIPVGSFVHNVELKPGNGAAIARAAGCYAQIVGRDGQYVLLRLRSGQIRLILSSCKATIGVVSNPDHKNRKLGKAGRSRWLGIRPTVRGVAMNPVDHPHGGGEGKTSGGRHPVTPWGVATKGKKTRKRNKSSDKYIKQLKG.

Disordered stretches follow at residues 21 to 59 (KVGL…GGHK) and 223 to 274 (VAMN…QLKG). Low complexity predominate over residues 32-42 (SLTSGKKSSGG). Basic residues predominate over residues 45-59 (NHGRITTRHRGGGHK). A compositionally biased stretch (basic and acidic residues) spans 263-274 (KSSDKYIKQLKG).

The protein belongs to the universal ribosomal protein uL2 family. As to quaternary structure, part of the 50S ribosomal subunit. Forms a bridge to the 30S subunit in the 70S ribosome.

In terms of biological role, one of the primary rRNA binding proteins. Required for association of the 30S and 50S subunits to form the 70S ribosome, for tRNA binding and peptide bond formation. It has been suggested to have peptidyltransferase activity; this is somewhat controversial. Makes several contacts with the 16S rRNA in the 70S ribosome. This chain is Large ribosomal subunit protein uL2, found in Wolbachia sp. subsp. Drosophila simulans (strain wRi).